We begin with the raw amino-acid sequence, 827 residues long: Cadherin-17 (827 aa).

The N-terminal stretch at M1–G21 is a signal peptide. Topologically, residues Q22–M786 are extracellular. Cadherin domains lie at P29–Q127, T128–P243, V244–C339, L340–F448, E449–F565, P566–L666, and A667–G776. Residues N148, N183, N249, N418, N545, N573, and N721 are each glycosylated (N-linked (GlcNAc...) asparagine). A helical transmembrane segment spans residues A787–I807. At R808 to S827 the chain is on the cytoplasmic side.

As to expression, liver and intestine.

The protein localises to the cell membrane. Cadherins are calcium-dependent cell adhesion proteins. They preferentially interact with themselves in a homophilic manner in connecting cells; cadherins may thus contribute to the sorting of heterogeneous cell types. LI-cadherin may have a role in the morphological organization of liver and intestine. The polypeptide is Cadherin-17 (Cdh17) (Rattus norvegicus (Rat)).